The following is a 218-amino-acid chain: Small ribosomal subunit protein uS3c (218 aa).

In terms of domain architecture, KH type-2 spans 47-118 (VQKNIRISSG…KLNIAITRIS (72 aa)).

The protein belongs to the universal ribosomal protein uS3 family. In terms of assembly, part of the 30S ribosomal subunit.

Its subcellular location is the plastid. The protein resides in the chloroplast. The polypeptide is Small ribosomal subunit protein uS3c (rps3) (Crucihimalaya wallichii (Rock-cress)).